Reading from the N-terminus, the 345-residue chain is CRISPR-associated endonuclease Cas1 1 (345 aa).

A divalent metal cation contacts are provided by Glu168, His239, and Glu254.

The protein belongs to the CRISPR-associated endonuclease Cas1 family. Forms a heterotetramer with a Cas2 homodimer. Homodimer. A divalent metal cation serves as cofactor.

CRISPR (clustered regularly interspaced short palindromic repeat), is an adaptive immune system that provides protection against mobile genetic elements (viruses, transposable elements and conjugative plasmids). CRISPR clusters contain sequences complementary to antecedent mobile elements and target invading nucleic acids. CRISPR clusters are transcribed and processed into CRISPR RNA (crRNA). Involved in the integration of spacer DNA into the CRISPR cassette. Acts as a dsDNA and ssRNA nuclease, binds to linear and circular dsDNA and linear ssRNA and ssDNA. The protein is CRISPR-associated endonuclease Cas1 1 of Archaeoglobus fulgidus (strain ATCC 49558 / DSM 4304 / JCM 9628 / NBRC 100126 / VC-16).